An 861-amino-acid polypeptide reads, in one-letter code: Protein argonaute-4 (861 aa).

The PAZ domain maps to 219 to 338; it reads PIIEFMCEVL…LPLEVCNIVA (120 aa). Residues 509 to 820 enclose the Piwi domain; it reads LIVVILPGKT…VAFRARYHLV (312 aa). Residues 825–846 form a disordered region; sequence DSAEGSHVSGQSNGRDPQALAK.

This sequence belongs to the argonaute family. Ago subfamily. As to quaternary structure, interacts with EIF4B, IMP8, PRMT5, TNRC6A and TNRC6B. Interacts with ZFP36. Ubiquitinated on surface-exposed lysines by a SCF-like E3 ubiquitin-protein ligase complex containing ZSWIM8 during target-directed microRNA degradation (TDMD), a process that mediates degradation of microRNAs (miRNAs). Ubiquitination by the SCF-like E3 ubiquitin-protein ligase complex containing ZSWIM8 leads to its subsequent degradation, thereby exposing miRNAs for degradation. ZSWIM8 recognizes and binds AGO4 when it is engaged with a TDMD target.

The protein resides in the cytoplasm. It is found in the P-body. In terms of biological role, required for RNA-mediated gene silencing (RNAi). Binds to short RNAs such as microRNAs (miRNAs) and represses the translation of mRNAs which are complementary to them. Lacks endonuclease activity and does not appear to cleave target mRNAs. Also required for RNA-directed transcription and replication of the human hapatitis delta virus (HDV). This is Protein argonaute-4 (AGO4) from Homo sapiens (Human).